Here is a 70-residue protein sequence, read N- to C-terminus: ATP synthase subunit c (70 aa).

The next 2 membrane-spanning stretches (helical) occupy residues 3 to 23 and 47 to 67; these read FIAA…GNGM and FIGV…AFML.

It belongs to the ATPase C chain family. As to quaternary structure, F-type ATPases have 2 components, F(1) - the catalytic core - and F(0) - the membrane proton channel. F(1) has five subunits: alpha(3), beta(3), gamma(1), delta(1), epsilon(1). F(0) has three main subunits: a(1), b(2) and c(10-14). The alpha and beta chains form an alternating ring which encloses part of the gamma chain. F(1) is attached to F(0) by a central stalk formed by the gamma and epsilon chains, while a peripheral stalk is formed by the delta and b chains.

The protein resides in the cell membrane. Functionally, f(1)F(0) ATP synthase produces ATP from ADP in the presence of a proton or sodium gradient. F-type ATPases consist of two structural domains, F(1) containing the extramembraneous catalytic core and F(0) containing the membrane proton channel, linked together by a central stalk and a peripheral stalk. During catalysis, ATP synthesis in the catalytic domain of F(1) is coupled via a rotary mechanism of the central stalk subunits to proton translocation. Its function is as follows. Key component of the F(0) channel; it plays a direct role in translocation across the membrane. A homomeric c-ring of between 10-14 subunits forms the central stalk rotor element with the F(1) delta and epsilon subunits. This chain is ATP synthase subunit c, found in Lacticaseibacillus casei (strain BL23) (Lactobacillus casei).